A 191-amino-acid chain; its full sequence is dCTP deaminase, dUMP-forming (191 aa).

DCTP-binding positions include 101 to 106 (KSSLGR), D119, 127 to 129 (TLE), Q148, Y162, and Q174. The Proton donor/acceptor role is filled by E129. The segment at 163–191 (GSAKYGSRYQGQRGPTPSRSYQNFHRTPI) is disordered. Residues 171–191 (YQGQRGPTPSRSYQNFHRTPI) show a composition bias toward polar residues.

This sequence belongs to the dCTP deaminase family. In terms of assembly, homotrimer.

The catalysed reaction is dCTP + 2 H2O = dUMP + NH4(+) + diphosphate. The protein operates within pyrimidine metabolism; dUMP biosynthesis; dUMP from dCTP: step 1/1. Bifunctional enzyme that catalyzes both the deamination of dCTP to dUTP and the hydrolysis of dUTP to dUMP without releasing the toxic dUTP intermediate. This chain is dCTP deaminase, dUMP-forming, found in Nocardioides sp. (strain ATCC BAA-499 / JS614).